A 144-amino-acid chain; its full sequence is Benzoylsuccinyl-CoA thiolase subunit BbsA (144 aa).

Zn(2+) contacts are provided by C40, C43, C54, and C57.

The protein belongs to the BbsA family. In terms of assembly, heterotetramer composed of two BbsA subunits and two BbsB subunits. BbsA forms homodimeric subcomplexes. Both BbsA and BbsB are essential for enzymatic activity.

It catalyses the reaction (S)-2-benzoylsuccinyl-CoA + CoA = benzoyl-CoA + succinyl-CoA. Its pathway is xenobiotic degradation; toluene degradation. Functionally, component of the BbsAB thiolase complex, which catalyzes the thiolytic cleavage of (S)-2-benzoylsuccinyl-CoA to succinyl-CoA and benzoyl-CoA, the final step of anaerobic toluene metabolism. The BbsA subunit critically contributes to an induced-fit process for productive binding of a CoA substrate into the active site of BbsB. This is Benzoylsuccinyl-CoA thiolase subunit BbsA from Thauera aromatica.